The primary structure comprises 696 residues: Elongation factor G (696 aa).

Residues 8–288 form the tr-type G domain; sequence EDYRNFGIMA…AVVEYLPSPA (281 aa). GTP-binding positions include 17–24, 86–90, and 140–143; these read AHIDAGKT, DTPGH, and NKMD.

The protein belongs to the TRAFAC class translation factor GTPase superfamily. Classic translation factor GTPase family. EF-G/EF-2 subfamily.

It localises to the cytoplasm. Its function is as follows. Catalyzes the GTP-dependent ribosomal translocation step during translation elongation. During this step, the ribosome changes from the pre-translocational (PRE) to the post-translocational (POST) state as the newly formed A-site-bound peptidyl-tRNA and P-site-bound deacylated tRNA move to the P and E sites, respectively. Catalyzes the coordinated movement of the two tRNA molecules, the mRNA and conformational changes in the ribosome. In Mesorhizobium japonicum (strain LMG 29417 / CECT 9101 / MAFF 303099) (Mesorhizobium loti (strain MAFF 303099)), this protein is Elongation factor G.